We begin with the raw amino-acid sequence, 118 residues long: Large ribosomal subunit protein eL18 (118 aa).

The protein belongs to the eukaryotic ribosomal protein eL18 family.

This Sulfolobus acidocaldarius (strain ATCC 33909 / DSM 639 / JCM 8929 / NBRC 15157 / NCIMB 11770) protein is Large ribosomal subunit protein eL18 (rpl18e).